Here is a 357-residue protein sequence, read N- to C-terminus: Mannonate dehydratase (357 aa).

It belongs to the mannonate dehydratase family. Requires Fe(2+) as cofactor. Mn(2+) serves as cofactor.

It carries out the reaction D-mannonate = 2-dehydro-3-deoxy-D-gluconate + H2O. It participates in carbohydrate metabolism; pentose and glucuronate interconversion. Its function is as follows. Catalyzes the dehydration of D-mannonate. The chain is Mannonate dehydratase from Sorangium cellulosum (strain So ce56) (Polyangium cellulosum (strain So ce56)).